The chain runs to 288 residues: uncharacterized protein (288 aa).

A compositionally biased stretch (basic and acidic residues) spans 1-12; it reads MTEGRCAQHPDG. Residues 1-20 form a disordered region; the sequence is MTEGRCAQHPDGLDVQDVCD.

The protein belongs to the class IV-like SAM-binding methyltransferase superfamily. RNA methyltransferase TrmH family.

This is an uncharacterized protein from Mycobacterium tuberculosis (strain ATCC 25618 / H37Rv).